The following is a 311-amino-acid chain: Long form salivary protein D7L1 (311 aa).

The signal sequence occupies residues 1–21; sequence MIVTGVLLFILLELFAQGSQA. Disulfide bonds link C37–C73, C69–C128, C178–C211, and C252–C263.

The protein belongs to the PBP/GOBP family.

The protein resides in the secreted. Modulates blood feeding of female mosquitoes on vertebrate species by binding and sequestering different mediators involved in the host response. Binds leukotriene C4 and U-46619, a stable analog of thromboxane A2. Inhibits agonist-induced platelet aggregation. Exhibits vasodilating activity. The chain is Long form salivary protein D7L1 from Anopheles gambiae (African malaria mosquito).